The sequence spans 218 residues: Capsid protein (218 aa).

Position 1 is an N-acetylmethionine; by host (Met-1). Residues Met-1 to Ala-28 form a disordered region. The segment covering Arg-11–Ser-21 has biased composition (basic residues).

Belongs to the cucumovirus capsid protein family.

The protein resides in the virion. Functionally, capsid protein. Probably binds RNA and plays a role in packaging. This chain is Capsid protein, found in Cucumis sativus (Cucumber).